Consider the following 240-residue polypeptide: Large ribosomal subunit protein bL25 (240 aa).

2 disordered regions span residues methionine 1–glutamate 23 and proline 207–lysine 240.

This sequence belongs to the bacterial ribosomal protein bL25 family. CTC subfamily. Part of the 50S ribosomal subunit; part of the 5S rRNA/L5/L18/L25 subcomplex. Contacts the 5S rRNA. Binds to the 5S rRNA independently of L5 and L18.

Its function is as follows. This is one of the proteins that binds to the 5S RNA in the ribosome where it forms part of the central protuberance. This chain is Large ribosomal subunit protein bL25, found in Rhodopseudomonas palustris (strain BisB18).